The primary structure comprises 349 residues: Bifunctional nitrilase/nitrile hydratase NIT4A (349 aa).

A CN hydrolase domain is found at 29-301; the sequence is VRATVVQAST…EALISADLDL (273 aa). The active-site Proton acceptor is the Glu-69. The active-site Proton donor is the Lys-156. Residue Cys-190 is the Nucleophile of the active site.

It belongs to the carbon-nitrogen hydrolase superfamily. Nitrilase family. Expressed in roots, stems, cotyledons, leaves and flowers.

The protein localises to the cell membrane. The enzyme catalyses a nitrile + 2 H2O = a carboxylate + NH4(+). It catalyses the reaction 3-cyano-L-alanine + 2 H2O = L-aspartate + NH4(+). It carries out the reaction L-asparagine = 3-cyano-L-alanine + H2O. Its function is as follows. Highly specific for beta-cyano-L-alanine (Ala(CN)). Low activity with 3-phenylpropionitrile (PPN). Not associated with auxin production but may be involved in cyanide detoxification. The chain is Bifunctional nitrilase/nitrile hydratase NIT4A (NIT4A) from Nicotiana tabacum (Common tobacco).